Consider the following 185-residue polypeptide: MIDEALFDAEEKMEKAVAVARDDLSTIRTGRANPGMFSRITIDYYGAATLITQLASINVPEARLVVIKPYEANQLRAIETAIRNSDLGVNPTNDGALIRVAVPQLTEERRRELVKQAKHKGEEAKVSVRNIRRKAMEELHRIRKEGEAGEDEVGRAEKDLDKTTHQYVTQIDELVKHKEGELLEV.

It belongs to the RRF family.

It is found in the cytoplasm. Functionally, responsible for the release of ribosomes from messenger RNA at the termination of protein biosynthesis. May increase the efficiency of translation by recycling ribosomes from one round of translation to another. This chain is Ribosome-recycling factor, found in Mycobacterium bovis (strain BCG / Pasteur 1173P2).